Reading from the N-terminus, the 264-residue chain is Purine nucleoside phosphorylase slr1573 (264 aa).

3 residues coordinate Zn(2+): His-61, Cys-104, and His-121.

It belongs to the purine nucleoside phosphorylase YfiH/LACC1 family. In terms of assembly, homodimer. The cofactor is Cu(2+). It depends on Zn(2+) as a cofactor.

It carries out the reaction adenosine + phosphate = alpha-D-ribose 1-phosphate + adenine. The catalysed reaction is S-methyl-5'-thioadenosine + phosphate = 5-(methylsulfanyl)-alpha-D-ribose 1-phosphate + adenine. It catalyses the reaction inosine + phosphate = alpha-D-ribose 1-phosphate + hypoxanthine. The enzyme catalyses adenosine + H2O + H(+) = inosine + NH4(+). Its function is as follows. Purine nucleoside enzyme that catalyzes the phosphorolysis of adenosine and inosine nucleosides, yielding D-ribose 1-phosphate and the respective free bases, adenine and hypoxanthine. Also catalyzes the phosphorolysis of S-methyl-5'-thioadenosine into adenine and S-methyl-5-thio-alpha-D-ribose 1-phosphate. Also has adenosine deaminase activity. This chain is Purine nucleoside phosphorylase slr1573, found in Synechocystis sp. (strain ATCC 27184 / PCC 6803 / Kazusa).